A 37-amino-acid polypeptide reads, in one-letter code: Large ribosomal subunit protein bL36 (37 aa).

This sequence belongs to the bacterial ribosomal protein bL36 family.

The protein is Large ribosomal subunit protein bL36 of Dechloromonas aromatica (strain RCB).